The following is a 267-amino-acid chain: MAAPVVTAPGRALLRAGAGRLLRGGVQELLRPRHEGNAPDLACNFSLSQNRGTVIVERWWKVPLAGEGRKPRLHRRHRVYKLVEDTKHRPKENLELILTQSVENVGVRGDLVSVKKSLGRNRLLPQGLAVYASPENKKLFEEEKLLRQEGKLEKIQTKAGEATVKFLKSCRLEVGMKNNVKWELNPEIVARHFFKNLGVVVAPHTLKLPEEPITRWGEYWCEVTVNGLDTVRVPMSVVNFEKPKTKRYKYWLAQQAAKAMAPTSPQI.

A mitochondrion-targeting transit peptide spans 1 to 52 (MAAPVVTAPGRALLRAGAGRLLRGGVQELLRPRHEGNAPDLACNFSLSQNRG).

The protein belongs to the bacterial ribosomal protein bL9 family. Component of the mitochondrial large ribosomal subunit (mt-LSU). Mature mammalian 55S mitochondrial ribosomes consist of a small (28S) and a large (39S) subunit. The 28S small subunit contains a 12S ribosomal RNA (12S mt-rRNA) and 30 different proteins. The 39S large subunit contains a 16S rRNA (16S mt-rRNA), a copy of mitochondrial valine transfer RNA (mt-tRNA(Val)), which plays an integral structural role, and 52 different proteins.

Its subcellular location is the mitochondrion. The sequence is that of Large ribosomal subunit protein bL9m (MRPL9) from Homo sapiens (Human).